The sequence spans 238 residues: Ribonuclease PH (238 aa).

Residues Arg-86 and 124–126 (GTR) each bind phosphate.

It belongs to the RNase PH family. Homohexameric ring arranged as a trimer of dimers.

The catalysed reaction is tRNA(n+1) + phosphate = tRNA(n) + a ribonucleoside 5'-diphosphate. Functionally, phosphorolytic 3'-5' exoribonuclease that plays an important role in tRNA 3'-end maturation. Removes nucleotide residues following the 3'-CCA terminus of tRNAs; can also add nucleotides to the ends of RNA molecules by using nucleoside diphosphates as substrates, but this may not be physiologically important. Probably plays a role in initiation of 16S rRNA degradation (leading to ribosome degradation) during starvation. This chain is Ribonuclease PH, found in Nitrosospira multiformis (strain ATCC 25196 / NCIMB 11849 / C 71).